Consider the following 358-residue polypeptide: 3'(2'),5'-bisphosphate nucleotidase 2 (358 aa).

Residue Asp-54 is the Proton acceptor of the active site. Residues Glu-77, Asp-141, Ile-143, and Asp-144 each contribute to the Mg(2+) site. Residue Thr-146 is the Proton acceptor of the active site. Thr-146, His-243, Ser-272, Lys-275, Arg-289, and Asp-302 together coordinate adenosine 3',5'-bisphosphate. Residues His-243, Ser-272, Lys-275, Arg-289, and Asp-302 each coordinate AMP. Asp-302 is a binding site for Mg(2+).

Belongs to the inositol monophosphatase superfamily. Mg(2+) serves as cofactor.

The catalysed reaction is 3'-phosphoadenylyl sulfate + H2O = adenosine 5'-phosphosulfate + phosphate. The enzyme catalyses adenosine 3',5'-bisphosphate + H2O = AMP + phosphate. It catalyses the reaction adenosine 2',5'-bisphosphate + H2O = AMP + phosphate. Its function is as follows. Phosphatase that converts adenosine 3'-phosphate 5'-phosphosulfate (PAPS) to adenosine 5'-phosphosulfate (APS) and 3'(2')-phosphoadenosine 5'-phosphate (PAP) to AMP. Regulates the flux of sulfur in the sulfur-activation pathway by converting PAPS to APS. Involved in salt tolerance. The sequence is that of 3'(2'),5'-bisphosphate nucleotidase 2 (HAL22) from Candida albicans (strain SC5314 / ATCC MYA-2876) (Yeast).